Reading from the N-terminus, the 377-residue chain is L-arabinitol 4-dehydrogenase (377 aa).

Zn(2+)-binding residues include Cys-66, His-91, Glu-92, Cys-121, Cys-124, Cys-127, Cys-135, and Glu-176. Residues 203 to 204, Asp-224, Arg-229, Ile-296, and 320 to 322 each bind NAD(+); these read PI and QYR.

It belongs to the zinc-containing alcohol dehydrogenase family. In terms of assembly, homotetramer. It depends on Zn(2+) as a cofactor. In terms of processing, the N-terminus is blocked.

It catalyses the reaction L-arabinitol + NAD(+) = L-xylulose + NADH + H(+). It participates in carbohydrate degradation; L-arabinose degradation via L-arabinitol; D-xylulose 5-phosphate from L-arabinose (fungal route): step 2/5. Its function is as follows. Catalyzes the NAD-dependent oxidation of L-arabinitol to L-xylulose in the fungal L-arabinose catabolic pathway. L-arabinose catabolism is important for using plant material as a carbon source. Can partially compensate for xylitol dehydrogenase in xdh1 mutants. Also oxidizes galactitol to L-xylo-3-hexulose as an alternative to the standard Leloir pathway for D-galactose metabolism. NADP cannot act as a cosubstrate. This is L-arabinitol 4-dehydrogenase (lad1) from Hypocrea jecorina (Trichoderma reesei).